A 288-amino-acid polypeptide reads, in one-letter code: Sulfhydrogenase 2 subunit gamma (288 aa).

The 100-residue stretch at 4–103 (YRSYDARIIE…RGPYGNGFPM (100 aa)) folds into the FAD-binding FR-type domain. [2Fe-2S] cluster contacts are provided by Cys250, Cys255, Cys258, and Cys270.

As to quaternary structure, dimer of heterotetramer of alpha, beta, gamma and delta subunits. The nickel-containing alpha and delta subunits constitute the hydrogenase activity. The beta and gamma subunits (flavin-containing dimer) constitute the sulfur reductase activity. FAD serves as cofactor. The cofactor is [2Fe-2S] cluster.

The protein resides in the cytoplasm. The catalysed reaction is n sulfur + H2 = (n-1) sulfur + hydrogen sulfide + H(+). In terms of biological role, part of a bifunctional enzyme complex that functions as a hydrogen-evolving hydrogenase with sulfur-reducing activity. May play a role in hydrogen cycling during fermentative growth. Activity exhibited with NAD in addition to NADPH. The beta and gamma subunits form the sulfur-reducing component that catalyzes the cytoplasmic production of hydrogen sulfide in the presence of elemental sulfur. The chain is Sulfhydrogenase 2 subunit gamma from Pyrococcus furiosus (strain ATCC 43587 / DSM 3638 / JCM 8422 / Vc1).